Consider the following 514-residue polypeptide: 6-phosphofructo-2-kinase/fructose-2,6-bisphosphatase 3 (514 aa).

The interval 1–245 (MPLELTQSRV…VYYLMNIHVQ (245 aa)) is 6-phosphofructo-2-kinase. Position 42–50 (42–50 (GLPARGKTY)) interacts with ATP. Beta-D-fructose 6-phosphate contacts are provided by arginine 75 and arginine 99. Aspartate 125 is an active-site residue. Residues threonine 127 and arginine 133 each contribute to the beta-D-fructose 6-phosphate site. Cysteine 155 is a catalytic residue. ATP is bound at residue 164–169 (NIMEVK). The beta-D-fructose 6-phosphate site is built by lysine 169, arginine 190, and tyrosine 194. Positions 246 to 514 (PRTIYLCRHG…QPLLGQACLT (269 aa)) are fructose-2,6-bisphosphatase. Arginine 253 serves as a coordination point for beta-D-fructose 2,6-bisphosphate. The active-site Tele-phosphohistidine intermediate is histidine 254. Beta-D-fructose 2,6-bisphosphate is bound by residues asparagine 260 and glycine 266. Glutamate 323 functions as the Proton donor/acceptor in the catalytic mechanism. Positions 334, 348, 352, 363, 389, and 393 each coordinate beta-D-fructose 2,6-bisphosphate. Position 345-348 (345-348 (YALR)) interacts with ATP. ATP is bound by residues 389–393 (QAVLR) and tyrosine 425. Residues 444-475 (ERSEDAKKGPNPLMRRNSVTPLASPEPTKKPR) are disordered. Serine 461 bears the Phosphoserine; by AMPK and PKA mark. Position 463 is a phosphothreonine (threonine 463). At serine 467 the chain carries Phosphoserine. Residue threonine 471 is modified to Phosphothreonine; by PKC.

It in the C-terminal section; belongs to the phosphoglycerate mutase family. In terms of assembly, homodimer. Forms a heterodimer with PFKFB2. Post-translationally, phosphorylation by AMPK stimulates activity.

The catalysed reaction is beta-D-fructose 2,6-bisphosphate + H2O = beta-D-fructose 6-phosphate + phosphate. It catalyses the reaction beta-D-fructose 6-phosphate + ATP = beta-D-fructose 2,6-bisphosphate + ADP + H(+). Functionally, catalyzes both the synthesis and degradation of fructose 2,6-bisphosphate. The protein is 6-phosphofructo-2-kinase/fructose-2,6-bisphosphatase 3 (PFKFB3) of Pongo abelii (Sumatran orangutan).